The sequence spans 151 residues: MGRMHSRGKGISSSALPYKRTPPSWLKISSQDVEENICKFAKKGLTPSQIGVILRDSHGIAQVNSVTGSKILRILKAHGLAPEIPEDLYHLIKKAVSIRKHLERNRKDKDSKFRLILVESRIHRLARYYKKTKKLPPVWKYESTTASTLVA.

The protein belongs to the universal ribosomal protein uS15 family.

The polypeptide is Small ribosomal subunit protein uS15 (RPS13) (Glycine max (Soybean)).